The chain runs to 224 residues: Large ribosomal subunit protein uL3 (224 aa).

An N5-methylglutamine modification is found at Q158.

Belongs to the universal ribosomal protein uL3 family. Part of the 50S ribosomal subunit. Forms a cluster with proteins L14 and L19. Post-translationally, methylated by PrmB.

One of the primary rRNA binding proteins, it binds directly near the 3'-end of the 23S rRNA, where it nucleates assembly of the 50S subunit. The polypeptide is Large ribosomal subunit protein uL3 (Paracidovorax citrulli (strain AAC00-1) (Acidovorax citrulli)).